An 81-amino-acid chain; its full sequence is 8.6 kDa transglutaminase substrate (81 aa).

Multimeric. Hemolymph; Hemocyte.

The protein is 8.6 kDa transglutaminase substrate of Tachypleus tridentatus (Japanese horseshoe crab).